The following is a 201-amino-acid chain: NADH-quinone oxidoreductase subunit C (201 aa).

This sequence belongs to the complex I 30 kDa subunit family. NDH-1 is composed of 14 different subunits. Subunits NuoB, C, D, E, F, and G constitute the peripheral sector of the complex.

It localises to the cell inner membrane. It carries out the reaction a quinone + NADH + 5 H(+)(in) = a quinol + NAD(+) + 4 H(+)(out). Functionally, NDH-1 shuttles electrons from NADH, via FMN and iron-sulfur (Fe-S) centers, to quinones in the respiratory chain. The immediate electron acceptor for the enzyme in this species is believed to be ubiquinone. Couples the redox reaction to proton translocation (for every two electrons transferred, four hydrogen ions are translocated across the cytoplasmic membrane), and thus conserves the redox energy in a proton gradient. This Dechloromonas aromatica (strain RCB) protein is NADH-quinone oxidoreductase subunit C.